The sequence spans 243 residues: Pyridoxine 5'-phosphate synthase (243 aa).

Residue Asn7 coordinates 3-amino-2-oxopropyl phosphate. 9–10 (DH) is a 1-deoxy-D-xylulose 5-phosphate binding site. Arg18 provides a ligand contact to 3-amino-2-oxopropyl phosphate. Residue His43 is the Proton acceptor of the active site. Residues Arg45 and His50 each contribute to the 1-deoxy-D-xylulose 5-phosphate site. Glu70 functions as the Proton acceptor in the catalytic mechanism. Thr100 provides a ligand contact to 1-deoxy-D-xylulose 5-phosphate. The active-site Proton donor is His191. Residues Gly192 and 213 to 214 (GH) each bind 3-amino-2-oxopropyl phosphate.

Belongs to the PNP synthase family. Homooctamer; tetramer of dimers.

The protein localises to the cytoplasm. The enzyme catalyses 3-amino-2-oxopropyl phosphate + 1-deoxy-D-xylulose 5-phosphate = pyridoxine 5'-phosphate + phosphate + 2 H2O + H(+). It participates in cofactor biosynthesis; pyridoxine 5'-phosphate biosynthesis; pyridoxine 5'-phosphate from D-erythrose 4-phosphate: step 5/5. Catalyzes the complicated ring closure reaction between the two acyclic compounds 1-deoxy-D-xylulose-5-phosphate (DXP) and 3-amino-2-oxopropyl phosphate (1-amino-acetone-3-phosphate or AAP) to form pyridoxine 5'-phosphate (PNP) and inorganic phosphate. This chain is Pyridoxine 5'-phosphate synthase, found in Magnetococcus marinus (strain ATCC BAA-1437 / JCM 17883 / MC-1).